Reading from the N-terminus, the 1304-residue chain is Myosin-1 (1304 aa).

Residues 1–12 (MAIVKRGVRTKN) show a composition bias toward basic residues. Residues 1–24 (MAIVKRGVRTKNKQSQQPSKSGIK) form a disordered region. Positions 36 to 730 (VGVSDLTLLS…TLFALEDMRD (695 aa)) constitute a Myosin motor domain. Residue 129 to 136 (GESGAGKT) coordinates ATP. A Phosphoserine modification is found at Ser364. An actin-binding region spans residues 413-496 (SIGILDIYGF…PGLFAALNDS (84 aa)). 2 IQ domains span residues 734-754 (HNMA…KDDA) and 755-780 (ARLI…YGNG). A TH1 domain is found at 788-978 (RRRMSMLGSR…TVTVRQGLPG (191 aa)). Disordered regions lie at residues 963 to 1162 (DSYK…TYKA) and 1214 to 1304 (ECDP…DDDW). 2 stretches are compositionally biased toward polar residues: residues 964-983 (SYKS…SQNP) and 1001-1012 (RGSNMRSTSSYQ). Composition is skewed to low complexity over residues 1029–1052 (QPPV…PQAQ), 1072–1096 (QPHA…PQAQ), and 1120–1140 (PSAP…KKNV). Positions 1141 to 1156 (APPPPPAAASPPPKPK) are enriched in pro residues. Residues 1155-1217 (PKFPTYKAAY…PAAYVVECDP (63 aa)) form the SH3 domain. Composition is skewed to low complexity over residues 1217 to 1227 (PPANSPAGNAK) and 1236 to 1256 (LNSA…NGAG). The segment covering 1292 to 1304 (DSDEEDEEDDDDW) has biased composition (acidic residues).

Belongs to the TRAFAC class myosin-kinesin ATPase superfamily. Myosin family. Phosphorylation of the TEDS site (Ser-364) is required for the polarization of the actin cytoskeleton. Phosphorylation probably activates the myosin-I ATPase activity.

It localises to the cytoplasm. Its subcellular location is the cytoskeleton. The protein localises to the actin patch. In terms of biological role, type-I myosin implicated in the organization of the actin cytoskeleton. Required for proper actin cytoskeleton polarization. At the cell cortex, assembles in patch-like structures together with proteins from the actin-polymerizing machinery and promotes actin assembly. Functions as actin nucleation-promoting factor (NPF) for the Arp2/3 complex. In Debaryomyces hansenii (strain ATCC 36239 / CBS 767 / BCRC 21394 / JCM 1990 / NBRC 0083 / IGC 2968) (Yeast), this protein is Myosin-1 (MYO1).